The chain runs to 174 residues: Tat proofreading chaperone TtrD (174 aa).

Belongs to the TorD/DmsD family. Monomer.

The protein resides in the cytoplasm. In terms of biological role, binds specifically to the Tat signal peptide of the TtrA subunit of the tetrathionate reductase. The polypeptide is Tat proofreading chaperone TtrD (ttrD) (Archaeoglobus fulgidus (strain ATCC 49558 / DSM 4304 / JCM 9628 / NBRC 100126 / VC-16)).